The sequence spans 141 residues: Small ribosomal subunit protein uS11 (141 aa).

It belongs to the universal ribosomal protein uS11 family. As to quaternary structure, part of the 30S ribosomal subunit.

Its function is as follows. Located on the platform of the 30S subunit. The protein is Small ribosomal subunit protein uS11 of Pyrobaculum calidifontis (strain DSM 21063 / JCM 11548 / VA1).